Here is a 277-residue protein sequence, read N- to C-terminus: Large ribosomal subunit protein uL2 (277 aa).

The interval 212–277 (RWRGKRPHVR…KFIVRGRKSK (66 aa)) is disordered. A compositionally biased stretch (basic residues) spans 254 to 277 (TAGKKTRDKKKASTKFIVRGRKSK).

The protein belongs to the universal ribosomal protein uL2 family. As to quaternary structure, part of the 50S ribosomal subunit. Forms a bridge to the 30S subunit in the 70S ribosome.

Its function is as follows. One of the primary rRNA binding proteins. Required for association of the 30S and 50S subunits to form the 70S ribosome, for tRNA binding and peptide bond formation. It has been suggested to have peptidyltransferase activity; this is somewhat controversial. Makes several contacts with the 16S rRNA in the 70S ribosome. The sequence is that of Large ribosomal subunit protein uL2 from Leuconostoc mesenteroides subsp. mesenteroides (strain ATCC 8293 / DSM 20343 / BCRC 11652 / CCM 1803 / JCM 6124 / NCDO 523 / NBRC 100496 / NCIMB 8023 / NCTC 12954 / NRRL B-1118 / 37Y).